The primary structure comprises 462 residues: tRNA modification GTPase MnmE (462 aa).

3 residues coordinate (6S)-5-formyl-5,6,7,8-tetrahydrofolate: R26, E91, and R130. In terms of domain architecture, TrmE-type G spans 228-382 (GLSTAKIGRP…IEERINDIFF (155 aa)). N238 contacts K(+). GTP contacts are provided by residues 238 to 243 (NVGKSQ), 257 to 263 (TDIEGTT), and 282 to 285 (DTAG). A Mg(2+)-binding site is contributed by S242. Residues T257, I259, and T262 each coordinate K(+). A Mg(2+)-binding site is contributed by T263. A (6S)-5-formyl-5,6,7,8-tetrahydrofolate-binding site is contributed by K462.

Belongs to the TRAFAC class TrmE-Era-EngA-EngB-Septin-like GTPase superfamily. TrmE GTPase family. In terms of assembly, homodimer. Heterotetramer of two MnmE and two MnmG subunits. K(+) serves as cofactor.

Its subcellular location is the cytoplasm. Its function is as follows. Exhibits a very high intrinsic GTPase hydrolysis rate. Involved in the addition of a carboxymethylaminomethyl (cmnm) group at the wobble position (U34) of certain tRNAs, forming tRNA-cmnm(5)s(2)U34. In Streptococcus agalactiae, this protein is tRNA modification GTPase MnmE.